We begin with the raw amino-acid sequence, 457 residues long: Asparagine--tRNA ligase (457 aa).

Belongs to the class-II aminoacyl-tRNA synthetase family. As to quaternary structure, homodimer.

Its subcellular location is the cytoplasm. The enzyme catalyses tRNA(Asn) + L-asparagine + ATP = L-asparaginyl-tRNA(Asn) + AMP + diphosphate + H(+). The sequence is that of Asparagine--tRNA ligase from Phytoplasma australiense.